Reading from the N-terminus, the 654-residue chain is Translation factor GUF1, mitochondrial (654 aa).

Positions 57–237 constitute a tr-type G domain; sequence ENYRNFSIVA…SVIKNIPSPV (181 aa). GTP contacts are provided by residues 66-73, 130-134, and 184-187; these read AHVDHGKS, DTPGH, and NKID.

This sequence belongs to the TRAFAC class translation factor GTPase superfamily. Classic translation factor GTPase family. LepA subfamily.

It localises to the mitochondrion inner membrane. It carries out the reaction GTP + H2O = GDP + phosphate + H(+). Promotes mitochondrial protein synthesis. May act as a fidelity factor of the translation reaction, by catalyzing a one-codon backward translocation of tRNAs on improperly translocated ribosomes. Binds to mitochondrial ribosomes in a GTP-dependent manner. The chain is Translation factor GUF1, mitochondrial from Candida dubliniensis (strain CD36 / ATCC MYA-646 / CBS 7987 / NCPF 3949 / NRRL Y-17841) (Yeast).